Reading from the N-terminus, the 183-residue chain is Ribosome-recycling factor (183 aa).

The protein belongs to the RRF family.

It is found in the cytoplasm. In terms of biological role, responsible for the release of ribosomes from messenger RNA at the termination of protein biosynthesis. May increase the efficiency of translation by recycling ribosomes from one round of translation to another. This is Ribosome-recycling factor from Mycoplasma genitalium (strain ATCC 33530 / DSM 19775 / NCTC 10195 / G37) (Mycoplasmoides genitalium).